The sequence spans 464 residues: MIDKVRAFIHRHQLLSEGAAVIVGVSGGPDSLALLHVFLSLRDEWKLQVIAAHVDHMFRGRESEEEMEFVKRFCVERRILCETAQIDVPAFQRSAGLGAQEAARICRYRFFAELMEKHQAGYVAVGHHGDDQVETILMRLVRGSTSKGYAGIPVKRPFHGGYLIRPFLAVSRAEIEAYCRQMGLSPRCDPSNEKDDYTRNRFRHHIVPLLRQENPRLHERFQQYSEMMAEDEQFLEELAADALNKVMEKQHRDAALSIGPFLELPRPLQRRVLQLLLLRLYGGVPPTLTSVHIGHILMLCERGRPSGMIDLPKGLKVIRSYDRCLFTFDAESGEKGYWFELPVPALLPLPNGYAIISEFGEHYPRKQAGNDWFVVDPASVSLPLRVRTRRRGDRMVLKGTGGTKKLKEIFIEAKIPRMERDRWPIVEDADGRILWVPGLKKSAFEAQNRGQARYILLQYQAMNS.

26–31 (SGGPDS) contributes to the ATP binding site.

This sequence belongs to the tRNA(Ile)-lysidine synthase family.

Its subcellular location is the cytoplasm. It catalyses the reaction cytidine(34) in tRNA(Ile2) + L-lysine + ATP = lysidine(34) in tRNA(Ile2) + AMP + diphosphate + H(+). Its function is as follows. Ligates lysine onto the cytidine present at position 34 of the AUA codon-specific tRNA(Ile) that contains the anticodon CAU, in an ATP-dependent manner. Cytidine is converted to lysidine, thus changing the amino acid specificity of the tRNA from methionine to isoleucine. The protein is tRNA(Ile)-lysidine synthase of Geobacillus kaustophilus (strain HTA426).